Reading from the N-terminus, the 463-residue chain is V-type ATP synthase beta chain (463 aa).

Belongs to the ATPase alpha/beta chains family.

In terms of biological role, produces ATP from ADP in the presence of a proton gradient across the membrane. The V-type beta chain is a regulatory subunit. The polypeptide is V-type ATP synthase beta chain (Halothermothrix orenii (strain H 168 / OCM 544 / DSM 9562)).